The following is a 139-amino-acid chain: Nucleoside diphosphate kinase (139 aa).

Lys-10, Phe-58, Arg-86, Thr-92, Arg-103, and Asn-113 together coordinate ATP. The active-site Pros-phosphohistidine intermediate is His-116.

Belongs to the NDK family. Homotetramer. Requires Mg(2+) as cofactor.

It localises to the cytoplasm. The catalysed reaction is a 2'-deoxyribonucleoside 5'-diphosphate + ATP = a 2'-deoxyribonucleoside 5'-triphosphate + ADP. It catalyses the reaction a ribonucleoside 5'-diphosphate + ATP = a ribonucleoside 5'-triphosphate + ADP. Functionally, major role in the synthesis of nucleoside triphosphates other than ATP. The ATP gamma phosphate is transferred to the NDP beta phosphate via a ping-pong mechanism, using a phosphorylated active-site intermediate. The sequence is that of Nucleoside diphosphate kinase from Nitratidesulfovibrio vulgaris (strain ATCC 29579 / DSM 644 / CCUG 34227 / NCIMB 8303 / VKM B-1760 / Hildenborough) (Desulfovibrio vulgaris).